The primary structure comprises 777 residues: Lon protease (777 aa).

The region spanning 11 to 204 is the Lon N-terminal domain; that stretch reads IPVLPLRDVV…FLMAIMETEI (194 aa). 356-363 serves as a coordination point for ATP; it reads GPPGVGKT. Positions 592–773 constitute a Lon proteolytic domain; it reads LNQIGQVVGL…EEVLKIALEN (182 aa). Active-site residues include Ser679 and Lys722.

Belongs to the peptidase S16 family. In terms of assembly, homohexamer. Organized in a ring with a central cavity.

Its subcellular location is the cytoplasm. The enzyme catalyses Hydrolysis of proteins in presence of ATP.. In terms of biological role, ATP-dependent serine protease that mediates the selective degradation of mutant and abnormal proteins as well as certain short-lived regulatory proteins. Required for cellular homeostasis and for survival from DNA damage and developmental changes induced by stress. Degrades polypeptides processively to yield small peptide fragments that are 5 to 10 amino acids long. Binds to DNA in a double-stranded, site-specific manner. The chain is Lon protease from Buchnera aphidicola subsp. Schizaphis graminum (strain Sg).